A 282-amino-acid chain; its full sequence is Putative glycosyltransferase HI_0765 (282 aa).

It belongs to the glycosyltransferase 25 family.

In Haemophilus influenzae (strain ATCC 51907 / DSM 11121 / KW20 / Rd), this protein is Putative glycosyltransferase HI_0765.